Reading from the N-terminus, the 96-residue chain is Large ribosomal subunit protein uL23 (96 aa).

The protein belongs to the universal ribosomal protein uL23 family. Part of the 50S ribosomal subunit. Contacts protein L29, and trigger factor when it is bound to the ribosome.

Its function is as follows. One of the early assembly proteins it binds 23S rRNA. One of the proteins that surrounds the polypeptide exit tunnel on the outside of the ribosome. Forms the main docking site for trigger factor binding to the ribosome. In Caldicellulosiruptor saccharolyticus (strain ATCC 43494 / DSM 8903 / Tp8T 6331), this protein is Large ribosomal subunit protein uL23.